The chain runs to 95 residues: MLLIKKINLQFFASKKGVGSTKNGRDSNPKYLGAKKSDGEFAKSGQIIYRQRGTKIYPGKNVGLGRDHTLFAKIDGIVKFTKFGDNKTKVSVIAK.

The propeptide occupies 1–12 (MLLIKKINLQFF). The interval 17 to 37 (GVGSTKNGRDSNPKYLGAKKS) is disordered.

It belongs to the bacterial ribosomal protein bL27 family. In terms of processing, the N-terminus is cleaved by ribosomal processing cysteine protease Prp.

This is Large ribosomal subunit protein bL27 from Malacoplasma penetrans (strain HF-2) (Mycoplasma penetrans).